The following is a 239-amino-acid chain: RNA polymerase sigma factor FliA (239 aa).

The segment at 16-88 (LWQRYVPLVR…MLDELRSRDW (73 aa)) is sigma-70 factor domain-2. An Interaction with polymerase core subunit RpoC motif is present at residues 43–46 (DLLQ). The tract at residues 96-166 (NAREVAQAMG…IELVTEEHQQ (71 aa)) is sigma-70 factor domain-3. The tract at residues 185–233 (AIESLPEREQLVLTLYYQEELNLKEIGAVLEVGESRVSQLHSQAIKRLR) is sigma-70 factor domain-4. The segment at residues 207 to 226 (LKEIGAVLEVGESRVSQLHS) is a DNA-binding region (H-T-H motif).

This sequence belongs to the sigma-70 factor family. FliA subfamily.

The protein localises to the cytoplasm. Its function is as follows. Sigma factors are initiation factors that promote the attachment of RNA polymerase to specific initiation sites and are then released. This sigma factor controls the expression of flagella-related genes. This is RNA polymerase sigma factor FliA from Salmonella typhi.